Consider the following 389-residue polypeptide: MSKHDKPLDFLWFIPTSGDGSYLGSDDLSRPADPGYFREIAQAADRLGYSGVLIPTGVACEESFILAANLAAYTEKLKFLVAIRPGVASPAYYARLASTLDRVSHGRLLLNIVVGGSAQELAGDGIFLPHDERYDHADEFFQVFNSLIETGKGDLDGKYIKAQGARLGLPPVQEPRPPLYFGGSSDAGIEFSAGITDKYLTWGEPPAQVAEKIVKVRAAAAKNGREVTFGIRLHFIVRETDEEAWADADRLISKLSDETIASAQEVFSKASDSVGQARMQALHNGRRDKLEVSPNLWAGIGLVRSGAGTALVGSPKTVAARLREYQALGIDTVIASGYPHLEEAYRLSELLFPEIGIDGPRNQIRSSFGAKQVFGGGGHGGNVKLVSGS.

Belongs to the SsuD family.

It carries out the reaction an alkanesulfonate + FMNH2 + O2 = an aldehyde + FMN + sulfite + H2O + 2 H(+). Its function is as follows. Catalyzes the desulfonation of aliphatic sulfonates. The polypeptide is Alkanesulfonate monooxygenase (Agrobacterium fabrum (strain C58 / ATCC 33970) (Agrobacterium tumefaciens (strain C58))).